A 624-amino-acid polypeptide reads, in one-letter code: MSTDNKQSLPAITLAAIGVVYGDIGTSPLYTLRECLSGQFGFGVERDAVFGFLSLIFWLLIFVVSIKYLTFVIRADNAGEGGILTLMSLAGRNTSARTTSMLVIMGLIGGSFFYGEVVITPAISVMSAIEGLEIVAPQLDTWIVPLSIIVLTLLFMIQKHGTAMVGKLFAPIMLTWFLILAGLGLRSIIANPEVLHALNPMWAVHFFLEYKTVSFIALGAVVLSITGVEALYADMGHFGKFPIRLAWFTVVLPSLTLNYFGQGALLLKNPEAIKNPFFLLAPDWALIPLLIIAALATVIASQAVISGVFLLTRQAVRLGYLSPMRIIHTSEMESGQIYIPFVNWMLYVAVVIVIVIVSFEHSSNLAAAYGIAVTGTMVLTSILSTTVARQNWHWNKYFVALILIAFLCVDIPLFTANLDKLLSGGWLPLSLGTVMFIVMTTWKSERFRLLRRMHEHGNSLEAMIASLEKSPPVRVPGTEVYMSRAINVIPFALMHNLKHNKVLHERVILLTLRTEDAPYVHNVRRVQIEQLSPTFWRVVASYGWRETPNVEEVFHRCGLEGLSCRMMETSFFMSHESLILGKRPWYLRLRGKLYLLLQRNALRAPDQFEIPPNRVIELGTQVEI.

Helical transmembrane passes span 9-29, 49-69, 103-123, 137-157, 165-185, 213-233, 247-267, 276-296, 337-357, 365-385, 398-418, and 421-441; these read LPAI…TSPL, VFGF…IKYL, VIMG…TPAI, PQLD…LFMI, VGKL…GLGL, VSFI…ALYA, WFTV…ALLL, PFFL…AALA, IYIP…IVIV, LAAA…ILST, FVAL…TANL, and LLSG…VMTT.

This sequence belongs to the HAK/KUP transporter (TC 2.A.72) family.

It localises to the cell inner membrane. The catalysed reaction is K(+)(in) + H(+)(in) = K(+)(out) + H(+)(out). Its function is as follows. Responsible for the low-affinity transport of potassium into the cell. Likely operates as a K(+):H(+) symporter. This Shigella dysenteriae serotype 1 (strain Sd197) protein is Low affinity potassium transport system protein Kup.